The primary structure comprises 228 residues: Cytidylate kinase (228 aa).

17 to 25 (GPTASGKGT) is an ATP binding site.

Belongs to the cytidylate kinase family. Type 1 subfamily.

It is found in the cytoplasm. It carries out the reaction CMP + ATP = CDP + ADP. The enzyme catalyses dCMP + ATP = dCDP + ADP. This Burkholderia ambifaria (strain MC40-6) protein is Cytidylate kinase.